The chain runs to 353 residues: Photosystem II D2 protein (353 aa).

Threonine 2 is modified (N-acetylthreonine). A Phosphothreonine modification is found at threonine 2. A helical transmembrane segment spans residues 41–61 (CAYFALGGWFTGTTFVTSWYT). Histidine 118 contacts chlorophyll a. The chain crosses the membrane as a helical span at residues 125–141 (GFMLRQFELARSVQLRP). 2 residues coordinate pheophytin a: glutamine 130 and asparagine 143. A helical transmembrane segment spans residues 153-166 (VFISVFFIYPLGQS). Histidine 198 is a binding site for chlorophyll a. The chain crosses the membrane as a helical span at residues 208 to 228 (AALLCAIHGATVENTLFEDGD). A plastoquinone contacts are provided by histidine 215 and phenylalanine 262. Histidine 215 is a Fe cation binding site. Histidine 269 contributes to the Fe cation binding site. Residues 279 to 295 (GLWMSALGVVGLALNLR) form a helical membrane-spanning segment.

This sequence belongs to the reaction center PufL/M/PsbA/D family. As to quaternary structure, PSII is composed of 1 copy each of membrane proteins PsbA, PsbB, PsbC, PsbD, PsbE, PsbF, PsbH, PsbI, PsbJ, PsbK, PsbL, PsbM, PsbT, PsbX, PsbY, PsbZ, Psb30/Ycf12, at least 3 peripheral proteins of the oxygen-evolving complex and a large number of cofactors. It forms dimeric complexes. The cofactor is The D1/D2 heterodimer binds P680, chlorophylls that are the primary electron donor of PSII, and subsequent electron acceptors. It shares a non-heme iron and each subunit binds pheophytin, quinone, additional chlorophylls, carotenoids and lipids. There is also a Cl(-1) ion associated with D1 and D2, which is required for oxygen evolution. The PSII complex binds additional chlorophylls, carotenoids and specific lipids..

The protein localises to the plastid membrane. It catalyses the reaction 2 a plastoquinone + 4 hnu + 2 H2O = 2 a plastoquinol + O2. Functionally, photosystem II (PSII) is a light-driven water:plastoquinone oxidoreductase that uses light energy to abstract electrons from H(2)O, generating O(2) and a proton gradient subsequently used for ATP formation. It consists of a core antenna complex that captures photons, and an electron transfer chain that converts photonic excitation into a charge separation. The D1/D2 (PsbA/PsbD) reaction center heterodimer binds P680, the primary electron donor of PSII as well as several subsequent electron acceptors. D2 is needed for assembly of a stable PSII complex. The protein is Photosystem II D2 protein of Cuscuta reflexa (Southern Asian dodder).